Here is a 507-residue protein sequence, read N- to C-terminus: Maturase K (507 aa).

The protein belongs to the intron maturase 2 family. MatK subfamily.

The protein localises to the plastid. The protein resides in the chloroplast. In terms of biological role, usually encoded in the trnK tRNA gene intron. Probably assists in splicing its own and other chloroplast group II introns. The chain is Maturase K from Magnolia figo (Banana shrub).